The chain runs to 332 residues: Agamous-like MADS-box protein AGL66 (332 aa).

Positions 1-61 (MGRVKLEIKR…DRLSLFSGKT (61 aa)) constitute an MADS-box domain. Residues 120 to 151 (TAINSDVEELEHEVYKLQQQLLMAEEELRKYE) adopt a coiled-coil conformation.

In terms of assembly, forms a heterodimer with AGL30. Expressed in pollen.

The protein localises to the nucleus. In terms of biological role, probable transcription factor that forms a heterodimer with the MADS-box protein AGL30 and is involved in the regulation of pollen maturation at the late stages of pollen development and pollen tube growth. The polypeptide is Agamous-like MADS-box protein AGL66 (Arabidopsis thaliana (Mouse-ear cress)).